A 479-amino-acid chain; its full sequence is Deoxyribodipyrimidine photo-lyase (479 aa).

One can recognise a Photolyase/cryptochrome alpha/beta domain in the interval 6-137 (SLKAVWFRRD…PFYTFEDAYL (132 aa)). Y229 provides a ligand contact to FAD. Residue R233 participates in DNA binding. Residues 241–245 (TSRLS) and 278–285 (ELAWRDFY) contribute to the FAD site. 2 interaction with DNA regions span residues 278–285 (ELAWRDFY) and 344–345 (NR). FAD is bound at residue 375–377 (DYD). Q407 is a DNA binding site.

The protein belongs to the DNA photolyase class-1 family. In terms of assembly, monomer. FAD serves as cofactor. The cofactor is (6R)-5,10-methylene-5,6,7,8-tetrahydrofolate.

The catalysed reaction is cyclobutadipyrimidine (in DNA) = 2 pyrimidine residues (in DNA).. Functionally, involved in repair of UV radiation-induced DNA damage. Catalyzes the light-dependent monomerization (300-600 nm) of cyclobutyl pyrimidine dimers (in cis-syn configuration), which are formed between adjacent bases on the same DNA strand upon exposure to ultraviolet radiation. In Alkalihalophilus pseudofirmus (strain ATCC BAA-2126 / JCM 17055 / OF4) (Bacillus pseudofirmus), this protein is Deoxyribodipyrimidine photo-lyase (phr).